The sequence spans 164 residues: MEQIFEKLMYASRWIMAPIYLGLSLVLIGLGIKFFQEIFHILPIIFEITEVDLVLVTLSLIDITLVGGLIVMVMFSGYENFVSQLDVGEDSEKLSWLGKLDSGSLKNKVAASIVAISSIHLLKIFMDVKNIDNDKIMWYLLIHITFVLSAFAMGYLDKMTRAGK.

Helical transmembrane passes span 15-35 (IMAP…IKFF), 53-73 (LVLV…IVMV), 108-128 (KVAA…FMDV), and 136-156 (IMWY…MGYL).

This sequence belongs to the UPF0114 family.

The protein localises to the cell membrane. The sequence is that of UPF0114 protein Sbal223_3668 from Shewanella baltica (strain OS223).